A 359-amino-acid polypeptide reads, in one-letter code: 3-dehydroquinate synthase (359 aa).

NAD(+) contacts are provided by residues D71 to K76, G105 to D109, T129 to T130, K142, and K151. E184, H247, and H264 together coordinate Zn(2+).

The protein belongs to the sugar phosphate cyclases superfamily. Dehydroquinate synthase family. The cofactor is Co(2+). Requires Zn(2+) as cofactor. It depends on NAD(+) as a cofactor.

It is found in the cytoplasm. The enzyme catalyses 7-phospho-2-dehydro-3-deoxy-D-arabino-heptonate = 3-dehydroquinate + phosphate. It functions in the pathway metabolic intermediate biosynthesis; chorismate biosynthesis; chorismate from D-erythrose 4-phosphate and phosphoenolpyruvate: step 2/7. Catalyzes the conversion of 3-deoxy-D-arabino-heptulosonate 7-phosphate (DAHP) to dehydroquinate (DHQ). This chain is 3-dehydroquinate synthase, found in Burkholderia ambifaria (strain MC40-6).